The sequence spans 206 residues: Sclerostin domain-containing protein 1 (206 aa).

The signal sequence occupies residues 1–23 (MLPPAIHFYLLPLACILMKSCLA). N47 is a glycosylation site (N-linked (GlcNAc...) asparagine). Intrachain disulfides connect C75–C133, C89–C147, C100–C163, and C104–C165. Residues 75–170 (CRELRSTKYI…TACKCKRYTR (96 aa)) form the CTCK domain. N-linked (GlcNAc...) asparagine glycosylation is present at N173. The interval 174–206 (ESSHNFESMSPAKPVQHHRERKRASKSSKHSMS) is disordered. Over residues 188–206 (VQHHRERKRASKSSKHSMS) the composition is skewed to basic residues.

This sequence belongs to the sclerostin family. As to quaternary structure, interacts with BMP2, BMP4, BMP6 and BMP7 with high affinity. Highly expressed in kidney and weakly in lung.

The protein localises to the secreted. In terms of biological role, may be involved in the onset of endometrial receptivity for implantation/sensitization for the decidual cell reaction Enhances Wnt signaling and inhibits TGF-beta signaling. Directly antagonizes activity of BMP2, BMP4, BMP6 and BMP7 in a dose-dependent manner. This is Sclerostin domain-containing protein 1 (SOSTDC1) from Homo sapiens (Human).